Consider the following 433-residue polypeptide: Histidinol dehydrogenase homolog (433 aa).

Gln249 and His252 together coordinate Zn(2+). Active-site proton acceptor residues include Glu319 and His320. The Zn(2+) site is built by Asp353 and His412.

It belongs to the histidinol dehydrogenase family. It depends on Zn(2+) as a cofactor.

In Ruegeria pomeroyi (strain ATCC 700808 / DSM 15171 / DSS-3) (Silicibacter pomeroyi), this protein is Histidinol dehydrogenase homolog.